A 64-amino-acid chain; its full sequence is Small cysteine-rich protein (64 aa).

An N-terminal signal peptide occupies residues 1-17 (FVCVQARQIDPEQILRT). Residues 18-19 (PE) constitute a propeptide that is removed on maturation.

Contains 4 disulfide bonds.

Its subcellular location is the secreted. The protein resides in the nematocyst. This chain is Small cysteine-rich protein, found in Anemonia viridis (Snakelocks anemone).